We begin with the raw amino-acid sequence, 203 residues long: Small ribosomal subunit protein uS7 (203 aa).

The interval 1–21 (MSSEAPEPDAPASTDDERVSA) is disordered.

This sequence belongs to the universal ribosomal protein uS7 family. Part of the 30S ribosomal subunit.

Functionally, one of the primary rRNA binding proteins, it binds directly to 16S rRNA where it nucleates assembly of the head domain of the 30S subunit. Is located at the subunit interface close to the decoding center. In Natronomonas pharaonis (strain ATCC 35678 / DSM 2160 / CIP 103997 / JCM 8858 / NBRC 14720 / NCIMB 2260 / Gabara) (Halobacterium pharaonis), this protein is Small ribosomal subunit protein uS7.